Consider the following 316-residue polypeptide: Secondary metabolism regulator laeA (316 aa).

This sequence belongs to the methyltransferase superfamily. LaeA methyltransferase family. As to quaternary structure, component of the heterotrimeric velvet complex composed of laeA, veA and velB; VeA acting as a bridging protein between laeA and velB.

It localises to the nucleus. The enzyme catalyses L-methionyl-[protein] + S-adenosyl-L-methionine = S-methyl-L-methionyl-[protein] + S-adenosyl-L-homocysteine. Its function is as follows. Methyltransferase that performs automethylation. No other methyl-accepting substrate has been identified yet. Component of the velvet transcription factor complex that acts as a global regulator for secondary metabolite gene expression. Controls the biosynthetic gene cluster for beauvericin, a depsipeptide mycotoxin that functions as a virulence determinant. The velvet complex also regulates chromatin structure and transcription of siderophore biosynthetic genes and is required for infection of tomato plants. The velvet complex also governs expression of nitrate metabolism genes. The protein is Secondary metabolism regulator laeA of Fusarium oxysporum f. sp. lycopersici (strain 4287 / CBS 123668 / FGSC 9935 / NRRL 34936) (Fusarium vascular wilt of tomato).